Consider the following 437-residue polypeptide: UDP-N-acetylmuramate--L-alanine ligase (437 aa).

114–120 serves as a coordination point for ATP; that stretch reads GTHGKTS.

This sequence belongs to the MurCDEF family.

The protein localises to the cytoplasm. It catalyses the reaction UDP-N-acetyl-alpha-D-muramate + L-alanine + ATP = UDP-N-acetyl-alpha-D-muramoyl-L-alanine + ADP + phosphate + H(+). It participates in cell wall biogenesis; peptidoglycan biosynthesis. In terms of biological role, cell wall formation. The sequence is that of UDP-N-acetylmuramate--L-alanine ligase from Lactobacillus acidophilus (strain ATCC 700396 / NCK56 / N2 / NCFM).